The primary structure comprises 156 residues: MSQQGISLDLDLQIAVDNPRLPTQAEFETWVRAAIGQTKPVVELTIRIVDIAESQQLNSTYRGKDKPTNVLSFPFEAPPEVELPLLGDLVICAPVVEQEAIEQNKPLIAHWAHMVIHGSLHLLGYDHIIDEEADEMESLETQLVEGLGFDNPYKEA.

3 residues coordinate Zn(2+): His-117, His-121, and His-127.

This sequence belongs to the endoribonuclease YbeY family. Zn(2+) is required as a cofactor.

Its subcellular location is the cytoplasm. In terms of biological role, single strand-specific metallo-endoribonuclease involved in late-stage 70S ribosome quality control and in maturation of the 3' terminus of the 16S rRNA. The protein is Endoribonuclease YbeY of Shewanella frigidimarina (strain NCIMB 400).